A 99-amino-acid polypeptide reads, in one-letter code: C-C motif chemokine 8 (99 aa).

Residues 1-23 (MKVSAGILCLLLVAATFGTQVLA) form the signal peptide. Gln-24 is subject to Pyrrolidone carboxylic acid. Intrachain disulfides connect Cys-34–Cys-59 and Cys-35–Cys-75.

It belongs to the intercrine beta (chemokine CC) family. Monomer or homodimer; in equilibrium.

It is found in the secreted. Functionally, chemotactic factor that attracts monocytes. This protein can bind heparin. The polypeptide is C-C motif chemokine 8 (CCL8) (Bos taurus (Bovine)).